The following is a 179-amino-acid chain: Protein GrpE (179 aa).

The span at 1–14 (MSKKDKKEEIKEEV) shows a compositional bias: basic and acidic residues. The interval 1-40 (MSKKDKKEEIKEEVEATEPTTEESVEEVAEETSENKELQE) is disordered. A compositionally biased stretch (acidic residues) spans 15–32 (EATEPTTEESVEEVAEET).

It belongs to the GrpE family. Homodimer.

It localises to the cytoplasm. Its function is as follows. Participates actively in the response to hyperosmotic and heat shock by preventing the aggregation of stress-denatured proteins, in association with DnaK and GrpE. It is the nucleotide exchange factor for DnaK and may function as a thermosensor. Unfolded proteins bind initially to DnaJ; upon interaction with the DnaJ-bound protein, DnaK hydrolyzes its bound ATP, resulting in the formation of a stable complex. GrpE releases ADP from DnaK; ATP binding to DnaK triggers the release of the substrate protein, thus completing the reaction cycle. Several rounds of ATP-dependent interactions between DnaJ, DnaK and GrpE are required for fully efficient folding. The protein is Protein GrpE of Streptococcus mutans serotype c (strain ATCC 700610 / UA159).